A 267-amino-acid polypeptide reads, in one-letter code: 4-hydroxy-tetrahydrodipicolinate reductase (267 aa).

Residues 12-17 (GPRGRM), 100-102 (GTT), and 126-129 (APNF) contribute to the NAD(+) site. The Proton donor/acceptor role is filled by histidine 156. Histidine 157 provides a ligand contact to (S)-2,3,4,5-tetrahydrodipicolinate. The Proton donor role is filled by lysine 160. 166–167 (GT) provides a ligand contact to (S)-2,3,4,5-tetrahydrodipicolinate.

The protein belongs to the DapB family.

It is found in the cytoplasm. It catalyses the reaction (S)-2,3,4,5-tetrahydrodipicolinate + NAD(+) + H2O = (2S,4S)-4-hydroxy-2,3,4,5-tetrahydrodipicolinate + NADH + H(+). The enzyme catalyses (S)-2,3,4,5-tetrahydrodipicolinate + NADP(+) + H2O = (2S,4S)-4-hydroxy-2,3,4,5-tetrahydrodipicolinate + NADPH + H(+). The protein operates within amino-acid biosynthesis; L-lysine biosynthesis via DAP pathway; (S)-tetrahydrodipicolinate from L-aspartate: step 4/4. In terms of biological role, catalyzes the conversion of 4-hydroxy-tetrahydrodipicolinate (HTPA) to tetrahydrodipicolinate. This chain is 4-hydroxy-tetrahydrodipicolinate reductase, found in Bacillus subtilis (strain 168).